A 286-amino-acid chain; its full sequence is Beta-lactamase TEM-12 (286 aa).

The signal sequence occupies residues 1 to 23 (MSIQHFRVALIPFFAAFCLPVFA). Catalysis depends on Ser68, which acts as the Acyl-ester intermediate. Cys75 and Cys121 form a disulfide bridge. Glu166 acts as the Proton acceptor in catalysis. Substrate is bound at residue 232–234 (KSG).

This sequence belongs to the class-A beta-lactamase family.

The enzyme catalyses a beta-lactam + H2O = a substituted beta-amino acid. Its function is as follows. TEM-type are the most prevalent beta-lactamases in enterobacteria; they hydrolyze the beta-lactam bond in susceptible beta-lactam antibiotics, thus conferring resistance to penicillins and cephalosporins such as ceftazidime. The chain is Beta-lactamase TEM-12 (blaT-12b) from Klebsiella oxytoca.